Consider the following 435-residue polypeptide: ATP-dependent RNA helicase RhlB (435 aa).

The Q motif signature appears at 9 to 37 (QKFADLGLNPQVVEGLEKKGFEFCTPIQA). The 180-residue stretch at 40–219 (LPVLLSGQDI…FEHMHNPEHV (180 aa)) folds into the Helicase ATP-binding domain. 53-60 (AQTGTGKT) provides a ligand contact to ATP. Residues 165–168 (DEAD) carry the DEAD box motif. One can recognise a Helicase C-terminal domain in the interval 245-390 (ALLQTLIEEE…VSDYDSSALI (146 aa)). Positions 395 to 435 (APVRTPSARNQQRRTNTGGARSGDRKSNNRRPRQPRQHKEA) are disordered. The span at 401-413 (SARNQQRRTNTGG) shows a compositional bias: polar residues. Over residues 422 to 435 (NNRRPRQPRQHKEA) the composition is skewed to basic residues.

The protein belongs to the DEAD box helicase family. RhlB subfamily. In terms of assembly, component of the RNA degradosome, which is a multiprotein complex involved in RNA processing and mRNA degradation.

It localises to the cytoplasm. It catalyses the reaction ATP + H2O = ADP + phosphate + H(+). Functionally, DEAD-box RNA helicase involved in RNA degradation. Has RNA-dependent ATPase activity and unwinds double-stranded RNA. The chain is ATP-dependent RNA helicase RhlB from Vibrio vulnificus (strain CMCP6).